We begin with the raw amino-acid sequence, 210 residues long: Large ribosomal subunit protein uL3 (210 aa).

Residues Gly119–Arg143 form a disordered region.

This sequence belongs to the universal ribosomal protein uL3 family. Part of the 50S ribosomal subunit. Forms a cluster with proteins L14 and L19.

Its function is as follows. One of the primary rRNA binding proteins, it binds directly near the 3'-end of the 23S rRNA, where it nucleates assembly of the 50S subunit. The chain is Large ribosomal subunit protein uL3 from Lacticaseibacillus casei (strain BL23) (Lactobacillus casei).